Reading from the N-terminus, the 132-residue chain is Outer membrane protein assembly factor BamE (132 aa).

Residues 1-16 form the signal peptide; the sequence is MQKLVLTLLVTSLLAG. Cys17 is lipidated: N-palmitoyl cysteine. Cys17 carries S-diacylglycerol cysteine lipidation.

The protein belongs to the BamE family. As to quaternary structure, part of the Bam complex.

The protein localises to the cell outer membrane. Functionally, part of the outer membrane protein assembly complex, which is involved in assembly and insertion of beta-barrel proteins into the outer membrane. The protein is Outer membrane protein assembly factor BamE of Acinetobacter pittii (strain PHEA-2).